Here is a 345-residue protein sequence, read N- to C-terminus: MNLAVIFGGASYEHEISIVSAISLKKILPALEHFIFVDGNRDFYWIPASEMRSKHFADGIYKKNPKLFLRPGGFYAKGLWGEKRVPFDTALNLIHGGDGEDGKLASLLEFFRIPFIGPRIEASVMSFNKHLTKLYAKERGVKTLPYLLARKNEKREFGNEFPLIVKPLRLGSSIGVSIAKNRQELDYALDVAFEFDEAALLEPFMQGIKEYNLAGCKINGEYHFSIIEEPQKKEFLDFDKKYLDFSRTQKLLKADLSEASERLLKEAFIKLYDDSFEGSLIRCDFFVQNQEVFLNEINPIPGSLANYLFEDFPKILQSLAHNLPKERGIKIDYRYIHQIQKAKGK.

The ATP-grasp domain maps to 133–340 (KLYAKERGVK…IDYRYIHQIQ (208 aa)). 162 to 211 (PLIVKPLRLGSSIGVSIAKNRQELDYALDVAFEFDEAALLEPFMQGIKEY) is a binding site for ATP. Residues Asp-284, Glu-296, and Asn-298 each contribute to the Mg(2+) site.

The protein belongs to the D-alanine--D-alanine ligase family. Mg(2+) is required as a cofactor. Mn(2+) serves as cofactor.

The protein localises to the cytoplasm. The enzyme catalyses 2 D-alanine + ATP = D-alanyl-D-alanine + ADP + phosphate + H(+). Its pathway is cell wall biogenesis; peptidoglycan biosynthesis. In terms of biological role, cell wall formation. The chain is D-alanine--D-alanine ligase from Wolinella succinogenes (strain ATCC 29543 / DSM 1740 / CCUG 13145 / JCM 31913 / LMG 7466 / NCTC 11488 / FDC 602W) (Vibrio succinogenes).